The chain runs to 484 residues: Ribonuclease Y (484 aa).

The chain crosses the membrane as a helical span at residues phenylalanine 18–tyrosine 38. The region spanning serine 166 to aspartate 234 is the KH domain. Residues valine 293 to alanine 385 form the HD domain.

The protein belongs to the RNase Y family.

It localises to the cell membrane. In terms of biological role, endoribonuclease that initiates mRNA decay. The protein is Ribonuclease Y of Mycoplasma genitalium (strain ATCC 33530 / DSM 19775 / NCTC 10195 / G37) (Mycoplasmoides genitalium).